Consider the following 285-residue polypeptide: Bifunctional protein FolD (285 aa).

NADP(+) is bound by residues glycine 165–serine 167 and serine 190.

This sequence belongs to the tetrahydrofolate dehydrogenase/cyclohydrolase family. In terms of assembly, homodimer.

It catalyses the reaction (6R)-5,10-methylene-5,6,7,8-tetrahydrofolate + NADP(+) = (6R)-5,10-methenyltetrahydrofolate + NADPH. It carries out the reaction (6R)-5,10-methenyltetrahydrofolate + H2O = (6R)-10-formyltetrahydrofolate + H(+). Its pathway is one-carbon metabolism; tetrahydrofolate interconversion. In terms of biological role, catalyzes the oxidation of 5,10-methylenetetrahydrofolate to 5,10-methenyltetrahydrofolate and then the hydrolysis of 5,10-methenyltetrahydrofolate to 10-formyltetrahydrofolate. In Ligilactobacillus salivarius (strain UCC118) (Lactobacillus salivarius), this protein is Bifunctional protein FolD.